The chain runs to 504 residues: 5-epiaristolochene 1,3-dihydroxylase (504 aa).

Residues 2–22 (QFFSLVSIFLFLSFLFLLRKW) form a helical membrane-spanning segment. Cysteine 442 serves as a coordination point for heme.

The protein belongs to the cytochrome P450 family. Requires heme as cofactor.

Its subcellular location is the membrane. It catalyses the reaction (+)-5-epi-aristolochene + 2 reduced [NADPH--hemoprotein reductase] + 2 O2 = capsidiol + 2 oxidized [NADPH--hemoprotein reductase] + 2 H2O + 2 H(+). Its activity is regulated as follows. Inhibited by ancymidol and ketoconazole. Its function is as follows. Involved in the biosynthesis of capsidiol. Catalyzes the successive and independent hydroxylations at the C1 and C3 positions of 5-epiaristolochene. The second hydroxylation step is 8-fold more efficient than the first hydroxylation reaction. Capable of utilizing premnaspirodiene as a substrate. The chain is 5-epiaristolochene 1,3-dihydroxylase (CYP71D20) from Nicotiana tabacum (Common tobacco).